We begin with the raw amino-acid sequence, 371 residues long: Cytochrome b (371 aa).

4 consecutive transmembrane segments (helical) span residues F25–V45, W69–I90, W105–L125, and F170–I190. Heme b contacts are provided by H75 and H89. Heme b contacts are provided by H174 and H188. An a ubiquinone-binding site is contributed by H193. A run of 4 helical transmembrane segments spans residues Y218–F238, L280–H300, L312–T332, and Y339–P358.

It belongs to the cytochrome b family. In terms of assembly, the cytochrome bc1 complex contains 3 respiratory subunits (MT-CYB, CYC1 and UQCRFS1), 2 core proteins (UQCRC1 and UQCRC2) and probably 6 low-molecular weight proteins. Requires heme b as cofactor.

It localises to the mitochondrion inner membrane. In terms of biological role, component of the ubiquinol-cytochrome c reductase complex (complex III or cytochrome b-c1 complex) that is part of the mitochondrial respiratory chain. The b-c1 complex mediates electron transfer from ubiquinol to cytochrome c. Contributes to the generation of a proton gradient across the mitochondrial membrane that is then used for ATP synthesis. The chain is Cytochrome b (MT-CYB) from Simalia amethistina (Amethystine python).